The chain runs to 271 residues: Putative phosphoenolpyruvate synthase regulatory protein (271 aa).

An ADP-binding site is contributed by 151–158; that stretch reads GVSRSGKT.

This sequence belongs to the pyruvate, phosphate/water dikinase regulatory protein family. PSRP subfamily.

The catalysed reaction is [pyruvate, water dikinase] + ADP = [pyruvate, water dikinase]-phosphate + AMP + H(+). The enzyme catalyses [pyruvate, water dikinase]-phosphate + phosphate + H(+) = [pyruvate, water dikinase] + diphosphate. Functionally, bifunctional serine/threonine kinase and phosphorylase involved in the regulation of the phosphoenolpyruvate synthase (PEPS) by catalyzing its phosphorylation/dephosphorylation. This chain is Putative phosphoenolpyruvate synthase regulatory protein, found in Paraburkholderia xenovorans (strain LB400).